A 295-amino-acid chain; its full sequence is Protease HtpX (295 aa).

2 helical membrane passes run 4-24 (ILLF…TLSL) and 42-62 (QLLI…LFIS). Residue His-147 coordinates Zn(2+). The active site involves Glu-148. His-151 is a binding site for Zn(2+). 2 consecutive transmembrane segments (helical) span residues 158–178 (VTLA…ARII) and 199–219 (VATI…VMWF). Glu-224 provides a ligand contact to Zn(2+).

This sequence belongs to the peptidase M48B family. Zn(2+) is required as a cofactor.

It localises to the cell inner membrane. The protein is Protease HtpX of Pseudomonas fluorescens (strain ATCC BAA-477 / NRRL B-23932 / Pf-5).